The primary structure comprises 483 residues: UDP-N-acetylmuramoyl-L-alanyl-D-glutamate--2,6-diaminopimelate ligase (483 aa).

Residue Ser30 coordinates UDP-N-acetyl-alpha-D-muramoyl-L-alanyl-D-glutamate. 109 to 115 contacts ATP; it reads GTNGKTT. UDP-N-acetyl-alpha-D-muramoyl-L-alanyl-D-glutamate contacts are provided by residues 151–152, Ser178, and Arg186; that span reads TT. The residue at position 218 (Lys218) is an N6-carboxylysine. Meso-2,6-diaminopimelate-binding positions include Arg380, 403 to 406, Gly453, and Glu457; that span reads DNPR. The Meso-diaminopimelate recognition motif signature appears at 403–406; sequence DNPR.

It belongs to the MurCDEF family. MurE subfamily. Mg(2+) serves as cofactor. Post-translationally, carboxylation is probably crucial for Mg(2+) binding and, consequently, for the gamma-phosphate positioning of ATP.

It is found in the cytoplasm. It catalyses the reaction UDP-N-acetyl-alpha-D-muramoyl-L-alanyl-D-glutamate + meso-2,6-diaminopimelate + ATP = UDP-N-acetyl-alpha-D-muramoyl-L-alanyl-gamma-D-glutamyl-meso-2,6-diaminopimelate + ADP + phosphate + H(+). It functions in the pathway cell wall biogenesis; peptidoglycan biosynthesis. Catalyzes the addition of meso-diaminopimelic acid to the nucleotide precursor UDP-N-acetylmuramoyl-L-alanyl-D-glutamate (UMAG) in the biosynthesis of bacterial cell-wall peptidoglycan. This Chlamydia trachomatis serovar A (strain ATCC VR-571B / DSM 19440 / HAR-13) protein is UDP-N-acetylmuramoyl-L-alanyl-D-glutamate--2,6-diaminopimelate ligase.